Consider the following 106-residue polypeptide: Ribosomal protein eL42-like (106 aa).

The tract at residues 26-53 (YKKGKDSLYAQGRRRYDRKQSGYGGQTK) is disordered. Lys53 carries the N6-methyllysine modification.

Belongs to the eukaryotic ribosomal protein eL42 family. As to expression, ubiquitously expressed.

Its subcellular location is the cytoplasm. In Homo sapiens (Human), this protein is Ribosomal protein eL42-like (RPL36AL).